We begin with the raw amino-acid sequence, 379 residues long: Dual-specificity RNA methyltransferase RlmN (379 aa).

The Proton acceptor role is filled by Glu-90. Residues Glu-96–Asp-348 enclose the Radical SAM core domain. Cysteines 103 and 353 form a disulfide. Residues Cys-110, Cys-114, and Cys-117 each contribute to the [4Fe-4S] cluster site. Residues Gly-179–Glu-180, Ser-211, Ser-233–His-235, and Asn-310 each bind S-adenosyl-L-methionine. Cys-353 serves as the catalytic S-methylcysteine intermediate.

Belongs to the radical SAM superfamily. RlmN family. [4Fe-4S] cluster serves as cofactor.

The protein resides in the cytoplasm. It carries out the reaction adenosine(2503) in 23S rRNA + 2 reduced [2Fe-2S]-[ferredoxin] + 2 S-adenosyl-L-methionine = 2-methyladenosine(2503) in 23S rRNA + 5'-deoxyadenosine + L-methionine + 2 oxidized [2Fe-2S]-[ferredoxin] + S-adenosyl-L-homocysteine. It catalyses the reaction adenosine(37) in tRNA + 2 reduced [2Fe-2S]-[ferredoxin] + 2 S-adenosyl-L-methionine = 2-methyladenosine(37) in tRNA + 5'-deoxyadenosine + L-methionine + 2 oxidized [2Fe-2S]-[ferredoxin] + S-adenosyl-L-homocysteine. Its function is as follows. Specifically methylates position 2 of adenine 2503 in 23S rRNA and position 2 of adenine 37 in tRNAs. m2A2503 modification seems to play a crucial role in the proofreading step occurring at the peptidyl transferase center and thus would serve to optimize ribosomal fidelity. The sequence is that of Dual-specificity RNA methyltransferase RlmN from Nitrosomonas europaea (strain ATCC 19718 / CIP 103999 / KCTC 2705 / NBRC 14298).